The following is a 222-amino-acid chain: Ras-related protein Rab11C (222 aa).

A GTP-binding site is contributed by 22 to 29 (GDSAVGKT). Positions 44–52 (SKATIGVEF) match the Effector region motif. Residues 70–74 (DTAGQ) and 128–131 (NKTD) each bind GTP. 2 S-geranylgeranyl cysteine lipidation sites follow: Cys219 and Cys220.

Belongs to the small GTPase superfamily. Rab family.

It localises to the cell membrane. The protein is Ras-related protein Rab11C (RAB11C) of Nicotiana tabacum (Common tobacco).